We begin with the raw amino-acid sequence, 137 residues long: Small ribosomal subunit protein uS12 (137 aa).

The segment at 1-23 is disordered; the sequence is MPTINQLVRKGRKSKSSKSDAPA. D102 is modified (3-methylthioaspartic acid).

Belongs to the universal ribosomal protein uS12 family. In terms of assembly, part of the 30S ribosomal subunit. Contacts proteins S8 and S17. May interact with IF1 in the 30S initiation complex.

Its function is as follows. With S4 and S5 plays an important role in translational accuracy. Interacts with and stabilizes bases of the 16S rRNA that are involved in tRNA selection in the A site and with the mRNA backbone. Located at the interface of the 30S and 50S subunits, it traverses the body of the 30S subunit contacting proteins on the other side and probably holding the rRNA structure together. The combined cluster of proteins S8, S12 and S17 appears to hold together the shoulder and platform of the 30S subunit. This Levilactobacillus brevis (strain ATCC 367 / BCRC 12310 / CIP 105137 / JCM 1170 / LMG 11437 / NCIMB 947 / NCTC 947) (Lactobacillus brevis) protein is Small ribosomal subunit protein uS12.